We begin with the raw amino-acid sequence, 288 residues long: 5,10-methylenetetrahydrofolate reductase (288 aa).

The FAD site is built by Ala-51, His-73, Gly-106, Asp-107, Ala-118, Tyr-140, His-144, and Lys-159. Position 107 (Asp-107) interacts with (6S)-5-methyl-5,6,7,8-tetrahydrofolate. (6S)-5-methyl-5,6,7,8-tetrahydrofolate is bound at residue Gln-175. Gln-175 contributes to the NADH binding site.

Belongs to the methylenetetrahydrofolate reductase family. Requires FAD as cofactor.

It catalyses the reaction (6S)-5-methyl-5,6,7,8-tetrahydrofolate + NAD(+) = (6R)-5,10-methylene-5,6,7,8-tetrahydrofolate + NADH + H(+). It functions in the pathway one-carbon metabolism; tetrahydrofolate interconversion. Its pathway is amino-acid biosynthesis; L-methionine biosynthesis via de novo pathway. Its function is as follows. Catalyzes the NADH-dependent reduction of 5,10-methylenetetrahydrofolate to 5-methyltetrahydrofolate. Is required to provide the methyl group necessary for methionine synthetase to convert homocysteine to methionine; the methyl group is given by 5-methyltetrahydrofolate. Is required for Sphingobium SYK-6 to grow on vanillate or syringate as the sole source of carbon. This chain is 5,10-methylenetetrahydrofolate reductase, found in Sphingobium sp. (strain NBRC 103272 / SYK-6).